Reading from the N-terminus, the 313-residue chain is Uracil-DNA glycosylase (313 aa).

Residues 35–68 form a disordered region; that stretch reads DEPMPKKCRRPAGPPKGFISTRGDTSPSSDNNHI. Residues 56 to 68 show a composition bias toward polar residues; the sequence is RGDTSPSSDNNHI. The active-site Proton acceptor is the D153.

This sequence belongs to the uracil-DNA glycosylase (UDG) superfamily. UNG family.

Its subcellular location is the host nucleus. It carries out the reaction Hydrolyzes single-stranded DNA or mismatched double-stranded DNA and polynucleotides, releasing free uracil.. Its function is as follows. Excises uracil residues from the DNA which can arise as a result of misincorporation of dUMP residues by DNA polymerase or deamination of cytosines. Therefore may reduce deleterious uracil incorporation into the viral genome, particularly in terminally differentiated cells which lack DNA repair enzymes. The sequence is that of Uracil-DNA glycosylase (MDV014) from Gallus gallus (Chicken).